We begin with the raw amino-acid sequence, 388 residues long: Chorismate synthase (388 aa).

NADP(+) contacts are provided by Arg39 and Arg45. FMN is bound by residues 132-134 (RSS), 251-252 (NA), Gly296, 311-315 (KPIPT), and Arg337.

This sequence belongs to the chorismate synthase family. As to quaternary structure, homotetramer. It depends on FMNH2 as a cofactor.

It carries out the reaction 5-O-(1-carboxyvinyl)-3-phosphoshikimate = chorismate + phosphate. It participates in metabolic intermediate biosynthesis; chorismate biosynthesis; chorismate from D-erythrose 4-phosphate and phosphoenolpyruvate: step 7/7. Functionally, catalyzes the anti-1,4-elimination of the C-3 phosphate and the C-6 proR hydrogen from 5-enolpyruvylshikimate-3-phosphate (EPSP) to yield chorismate, which is the branch point compound that serves as the starting substrate for the three terminal pathways of aromatic amino acid biosynthesis. This reaction introduces a second double bond into the aromatic ring system. The polypeptide is Chorismate synthase (Staphylococcus haemolyticus (strain JCSC1435)).